A 479-amino-acid chain; its full sequence is Bifunctional AAC/APH (479 aa).

The N-acetyltransferase domain maps to 8-180; sequence ICIRTLIDDD…DCYLMEYRYD (173 aa). The acetyl-CoA binding site stretch occupies residues 110 to 153; it reads KGIGTRYIKLIFEFLKKERNANAVILDPHKNNPRAIRAYQKSGF. Residue Asp374 is the Proton acceptor; for phosphotransferase activity of the active site. Asp393 provides a ligand contact to a gentamycin.

It in the C-terminal section; belongs to the aminoglycoside phosphotransferase family.

Its subcellular location is the cytoplasm. It carries out the reaction a gentamycin + GTP = a gentamycin 2''-phosphate + GDP + H(+). Involved in resistance to gentamicin, tobramycin, and kanamycin. Tobramycin and kanamycin resistance is due to the ACC activity, specified by N-terminal region. The C-terminal region is a kinase that phosphorylates several 4,6-disubstituted aminoglycosides. The polypeptide is Bifunctional AAC/APH (aacA-aphD) (Enterococcus faecalis (strain ATCC 700802 / V583)).